A 693-amino-acid polypeptide reads, in one-letter code: Elongation factor G (693 aa).

Residues 8–282 (EKTRNIGIMA…AVIDYLPSPL (275 aa)) enclose the tr-type G domain. GTP-binding positions include 17–24 (AHVDAGKT), 81–85 (DTPGH), and 135–138 (NKMD).

Belongs to the TRAFAC class translation factor GTPase superfamily. Classic translation factor GTPase family. EF-G/EF-2 subfamily.

The protein resides in the cytoplasm. Functionally, catalyzes the GTP-dependent ribosomal translocation step during translation elongation. During this step, the ribosome changes from the pre-translocational (PRE) to the post-translocational (POST) state as the newly formed A-site-bound peptidyl-tRNA and P-site-bound deacylated tRNA move to the P and E sites, respectively. Catalyzes the coordinated movement of the two tRNA molecules, the mRNA and conformational changes in the ribosome. The polypeptide is Elongation factor G (Streptococcus pneumoniae (strain ATCC 700669 / Spain 23F-1)).